The following is a 278-amino-acid chain: HTH-type transcriptional regulator HdfR (278 aa).

An HTH lysR-type domain is found at 1 to 58 (MDTELLKTFLEVSRTRHFGRAAEALYLTQSAVSFRIRQLENQLGVNLFTRHRNNIRLT). Positions 18 to 37 (FGRAAEALYLTQSAVSFRIR) form a DNA-binding region, H-T-H motif.

This sequence belongs to the LysR transcriptional regulatory family.

Negatively regulates the transcription of the flagellar master operon flhDC by binding to the upstream region of the operon. The protein is HTH-type transcriptional regulator HdfR of Salmonella schwarzengrund (strain CVM19633).